The following is a 345-amino-acid chain: Very-long-chain 3-oxoacyl-CoA reductase (345 aa).

The chain crosses the membrane as a helical span at residues 26–46; it reads GAAVLLTTGTLFIASRVLTFV. Val71, Asp125, Asp133, Asn152, Tyr219, Lys223, Ile252, and Ser254 together coordinate NADP(+). The active-site Proton donor is the Tyr219. The Lowers pKa of active site Tyr role is filled by Lys223.

This sequence belongs to the short-chain dehydrogenases/reductases (SDR) family.

The protein localises to the endoplasmic reticulum membrane. The catalysed reaction is a very-long-chain (3R)-3-hydroxyacyl-CoA + NADP(+) = a very-long-chain 3-oxoacyl-CoA + NADPH + H(+). It participates in lipid metabolism; fatty acid biosynthesis. In terms of biological role, component of the microsomal membrane bound fatty acid elongation system, which produces the 26-carbon very long-chain fatty acids (VLCFA) from palmitate. Catalyzes the reduction of the 3-ketoacyl-CoA intermediate that is formed in each cycle of fatty acid elongation. VLCFAs serve as precursors for ceramide and sphingolipids. In Aspergillus fumigatus (strain CBS 144.89 / FGSC A1163 / CEA10) (Neosartorya fumigata), this protein is Very-long-chain 3-oxoacyl-CoA reductase.